Here is a 1074-residue protein sequence, read N- to C-terminus: Zinc finger protein 518B (1074 aa).

Residues His-12–Pro-24 show a composition bias toward polar residues. A disordered region spans residues His-12–Asn-36. 2 consecutive C2H2-type zinc fingers follow at residues Phe-162 to His-184 and Tyr-190 to His-213. Glycyl lysine isopeptide (Lys-Gly) (interchain with G-Cter in SUMO2) cross-links involve residues Lys-482, Lys-491, and Lys-558. Residues Ser-568–Ser-590 are disordered. Basic and acidic residues predominate over residues Arg-570–Ala-582. Lys-594 participates in a covalent cross-link: Glycyl lysine isopeptide (Lys-Gly) (interchain with G-Cter in SUMO2). 2 disordered regions span residues Thr-603–Val-632 and Lys-678–Ser-704. Basic and acidic residues predominate over residues Gly-604–Glu-622. Residues Gly-693–Ser-704 show a composition bias toward polar residues. Glycyl lysine isopeptide (Lys-Gly) (interchain with G-Cter in SUMO2) cross-links involve residues Lys-809, Lys-846, and Lys-860. The C2H2-type 3 zinc-finger motif lies at Phe-1036–His-1058.

Belongs to the krueppel C2H2-type zinc-finger protein family.

The protein localises to the nucleus. Functionally, through its association with the EHMT1-EHMT2/G9A and PRC2/EED-EZH2 histone methyltransferase complexes may function in gene silencing, regulating repressive post-translational methylation of histone tails at promoters of target genes. The chain is Zinc finger protein 518B (ZNF518B) from Homo sapiens (Human).